A 243-amino-acid chain; its full sequence is NH(3)-dependent NAD(+) synthetase (243 aa).

31–38 (GVSGGIDS) is an ATP binding site. Asp-37 contributes to the Mg(2+) binding site. Arg-110 contributes to the deamido-NAD(+) binding site. Thr-130 is an ATP binding site. Glu-135 contacts Mg(2+). Lys-143 and Asp-150 together coordinate deamido-NAD(+). Positions 159 and 181 each coordinate ATP. 227-228 (HK) lines the deamido-NAD(+) pocket.

The protein belongs to the NAD synthetase family. As to quaternary structure, homodimer.

It carries out the reaction deamido-NAD(+) + NH4(+) + ATP = AMP + diphosphate + NAD(+) + H(+). Its pathway is cofactor biosynthesis; NAD(+) biosynthesis; NAD(+) from deamido-NAD(+) (ammonia route): step 1/1. Catalyzes the ATP-dependent amidation of deamido-NAD to form NAD. Uses ammonia as a nitrogen source. The protein is NH(3)-dependent NAD(+) synthetase of Malacoplasma penetrans (strain HF-2) (Mycoplasma penetrans).